The primary structure comprises 132 residues: Transmembrane protein 170B (132 aa).

Residues Met-1–Trp-37 lie on the Extracellular side of the membrane. N-linked (GlcNAc...) asparagine glycosylation occurs at Asn-12. The helical transmembrane segment at Ile-38–Phe-58 threads the bilayer. Residues Val-59 to Arg-68 lie on the Cytoplasmic side of the membrane. Residues Val-69–Thr-89 form a helical membrane-spanning segment. The Extracellular portion of the chain corresponds to Ser-90–Met-104. Residues Ala-105–Phe-125 form a helical membrane-spanning segment. At Ser-126–Leu-132 the chain is on the cytoplasmic side.

Belongs to the TMEM170 family. In terms of assembly, interacts with CTNNB1.

The protein resides in the cell membrane. This chain is Transmembrane protein 170B (Tmem170b), found in Rattus norvegicus (Rat).